The chain runs to 376 residues: Glucose-1-phosphate adenylyltransferase (376 aa).

Alpha-D-glucose 1-phosphate contacts are provided by residues tyrosine 101, glycine 166, 181–182 (EK), and serine 192.

It belongs to the bacterial/plant glucose-1-phosphate adenylyltransferase family. As to quaternary structure, homotetramer.

It carries out the reaction alpha-D-glucose 1-phosphate + ATP + H(+) = ADP-alpha-D-glucose + diphosphate. Its pathway is glycan biosynthesis; glycogen biosynthesis. Involved in the biosynthesis of ADP-glucose, a building block required for the elongation reactions to produce glycogen. Catalyzes the reaction between ATP and alpha-D-glucose 1-phosphate (G1P) to produce pyrophosphate and ADP-Glc. The protein is Glucose-1-phosphate adenylyltransferase of Bacillus mycoides (strain KBAB4) (Bacillus weihenstephanensis).